A 341-amino-acid chain; its full sequence is NADH-quinone oxidoreductase subunit H 1 (341 aa).

The next 9 helical transmembrane spans lie at 7-27 (IILT…ISLL), 46-66 (PNVV…KYIF), 80-100 (FFLA…VIPF), 111-131 (VAIL…IMGG), 157-177 (LGLI…SHIV), 183-203 (AFGL…LFFI), 244-264 (YIAI…GWLS), 273-293 (VFWM…VKAI), and 305-325 (IGWK…AFLA).

It belongs to the complex I subunit 1 family. In terms of assembly, NDH-1 is composed of 14 different subunits. Subunits NuoA, H, J, K, L, M, N constitute the membrane sector of the complex.

The protein resides in the cell inner membrane. It carries out the reaction a quinone + NADH + 5 H(+)(in) = a quinol + NAD(+) + 4 H(+)(out). NDH-1 shuttles electrons from NADH, via FMN and iron-sulfur (Fe-S) centers, to quinones in the respiratory chain. The immediate electron acceptor for the enzyme in this species is believed to be ubiquinone. Couples the redox reaction to proton translocation (for every two electrons transferred, four hydrogen ions are translocated across the cytoplasmic membrane), and thus conserves the redox energy in a proton gradient. This subunit may bind ubiquinone. This chain is NADH-quinone oxidoreductase subunit H 1, found in Cereibacter sphaeroides (strain ATCC 17029 / ATH 2.4.9) (Rhodobacter sphaeroides).